Reading from the N-terminus, the 442-residue chain is MSSSSRNLSQENPIPRPNLAKTRTSLRDVGNRRAPLGDITNQKNGSRNPSPSSTLVNCSNKIGQSKKAPKPALSRNWNLGILDSGLPPKPNAKSNIIVPYEDTELLQSDDSLLCSSPALSLDASPTQSDPSISTHDSLTNHVVDYMVESTTDDGNDDDDDEIVNIDSDLMDPQLCASFACDIYEHLRVSEVNKRPALDYMERTQSSINASMRSILIDWLVEVAEEYRLSPETLYLAVNYVDRYLTGNAINKQNLQLLGVTCMMIAAKYEEVCVPQVEDFCYITDNTYLRNELLEMESSVLNYLKFELTTPTAKCFLRRFLRAAQGRKEVPSLLSECLACYLTELSLLDYAMLRYAPSLVAASAVFLAQYTLHPSRKPWNATLEHYTSYRAKHMEACVKNLLQLCNEKLSSDVVAIRKKYSQHKYKFAAKKLCPTSLPQELFL.

2 stretches are compositionally biased toward polar residues: residues 1-12 (MSSSSRNLSQEN) and 39-63 (ITNQ…NKIG). Positions 1-72 (MSSSSRNLSQ…GQSKKAPKPA (72 aa)) are disordered.

This sequence belongs to the cyclin family. Cyclin AB subfamily. As to quaternary structure, interacts with CDC20-1, CDC20-2, FZR2/CCS52A1 and FZR1/CCS52A2. In terms of tissue distribution, expressed in roots, stems and flowers.

The protein resides in the cytoplasm. The protein localises to the nucleus. Involved in the regulation of male meiosis progression. This chain is Cyclin-A1-2 (CYCA1-2), found in Arabidopsis thaliana (Mouse-ear cress).